A 161-amino-acid chain; its full sequence is MKVLYPGSFDPLTLGHLDLIHRASVLYEEVIIAVLENSTKSPTFSVSRRIEQIKESTKELSKIKILSYKGLTVECAKSLDVDFILRGLRAMSDFEYELQIAHTNRSIDKSIETIFLATEARHSFLSSSVVKEVAMFGGNIDHMVPAIVAKDLYKIYKQGDI.

Residue S8 coordinates substrate. ATP-binding positions include 8–9 (SF) and H16. Substrate-binding residues include K40, T72, and R86. Residues 87–89 (GLR), E97, and 122–128 (HSFLSSS) contribute to the ATP site.

Belongs to the bacterial CoaD family. Homohexamer. It depends on Mg(2+) as a cofactor.

Its subcellular location is the cytoplasm. The enzyme catalyses (R)-4'-phosphopantetheine + ATP + H(+) = 3'-dephospho-CoA + diphosphate. The protein operates within cofactor biosynthesis; coenzyme A biosynthesis; CoA from (R)-pantothenate: step 4/5. Its function is as follows. Reversibly transfers an adenylyl group from ATP to 4'-phosphopantetheine, yielding dephospho-CoA (dPCoA) and pyrophosphate. The polypeptide is Phosphopantetheine adenylyltransferase (Prochlorococcus marinus (strain SARG / CCMP1375 / SS120)).